Reading from the N-terminus, the 222-residue chain is Putative hemin import ATP-binding protein HrtA (222 aa).

Positions 3 to 222 (LVVKDISKTF…QLYDGKIKNS (220 aa)) constitute an ABC transporter domain. Residue 39-46 (GASGSGKT) coordinates ATP.

It belongs to the ABC transporter superfamily. HrtA family. As to quaternary structure, the complex is composed of two ATP-binding proteins (HrtA), two transmembrane proteins (HrtB) and a solute-binding protein.

The protein resides in the cell membrane. Functionally, part of the ABC transporter complex hrt involved in hemin import. Responsible for energy coupling to the transport system. The chain is Putative hemin import ATP-binding protein HrtA (hrtA) from Staphylococcus epidermidis (strain ATCC 12228 / FDA PCI 1200).